Reading from the N-terminus, the 158-residue chain is SsrA-binding protein (158 aa).

The protein belongs to the SmpB family.

The protein localises to the cytoplasm. Required for rescue of stalled ribosomes mediated by trans-translation. Binds to transfer-messenger RNA (tmRNA), required for stable association of tmRNA with ribosomes. tmRNA and SmpB together mimic tRNA shape, replacing the anticodon stem-loop with SmpB. tmRNA is encoded by the ssrA gene; the 2 termini fold to resemble tRNA(Ala) and it encodes a 'tag peptide', a short internal open reading frame. During trans-translation Ala-aminoacylated tmRNA acts like a tRNA, entering the A-site of stalled ribosomes, displacing the stalled mRNA. The ribosome then switches to translate the ORF on the tmRNA; the nascent peptide is terminated with the 'tag peptide' encoded by the tmRNA and targeted for degradation. The ribosome is freed to recommence translation, which seems to be the essential function of trans-translation. The protein is SsrA-binding protein of Buchnera aphidicola subsp. Baizongia pistaciae (strain Bp).